A 77-amino-acid chain; its full sequence is Acyl carrier protein (77 aa).

Residues 2–77 form the Carrier domain; it reads SDVADRVKKI…DAVKFISEAS (76 aa). S37 bears the O-(pantetheine 4'-phosphoryl)serine mark.

The protein belongs to the acyl carrier protein (ACP) family. Post-translationally, 4'-phosphopantetheine is transferred from CoA to a specific serine of apo-ACP by AcpS. This modification is essential for activity because fatty acids are bound in thioester linkage to the sulfhydryl of the prosthetic group.

It localises to the cytoplasm. It participates in lipid metabolism; fatty acid biosynthesis. Carrier of the growing fatty acid chain in fatty acid biosynthesis. The chain is Acyl carrier protein from Ruegeria pomeroyi (strain ATCC 700808 / DSM 15171 / DSS-3) (Silicibacter pomeroyi).